We begin with the raw amino-acid sequence, 947 residues long: Protocadherin alpha-4 (947 aa).

A signal peptide spans 1 to 29; that stretch reads MEFSWGSGQESQRLLLSFLFLAIWEPGNS. Cadherin domains lie at 30–133, 134–242, 243–350, 351–455, 456–565, and 573–681; these read QLHY…PPTF, PTTQ…SPVF, DRSL…APEL, EFKS…APAF, AQPE…APTL, and SGGI…APSR. Topologically, residues 30–697 are extracellular; it reads QLHYSIPEEA…NAEASLVDVN (668 aa). Residues C96 and C102 are joined by a disulfide bond. 2 N-linked (GlcNAc...) asparagine glycosylation sites follow: N257 and N265. N548 carries an N-linked (GlcNAc...) asparagine glycan. Residues 698–718 traverse the membrane as a helical segment; it reads VYLIIAICAVSSLLVLTLLLY. At 719–947 the chain is on the cytoplasmic side; that stretch reads SALRCSTVPS…GNSTTDNSDQ (229 aa). PXXP repeat units follow at residues 734–737, 774–777, 796–799, 829–832, 870–873, and 888–891; these read PPKP, PSLS, PRQP, PGGP, PGNP, and PGSP. The 6 X 4 AA repeats of P-X-X-P stretch occupies residues 734-891; sequence PPKPVMVCSS…PDKFIIPGSP (158 aa). Residues 738 to 947 are required for interaction with FYN; that stretch reads VMVCSSAVGS…GNSTTDNSDQ (210 aa). Disordered stretches follow at residues 761–805 and 824–853; these read GEYP…DWRY and ILRAGPGGPDQQWPTVSSATPEPEAGEVSP. Residues 897-947 are disordered; the sequence is RQESANNQIDKSDFITFGKKEETKKKKKKKKGNKTQEKKEKGNSTTDNSDQ. The span at 906–920 shows a compositional bias: basic and acidic residues; that stretch reads DKSDFITFGKKEETK.

As to quaternary structure, forms homodimers in trans (molecules expressed by two different cells). Forms promiscuous heterodimers in cis (at the plasma membrane of the same cell) with other protocadherins. Interacts with FYN. As to expression, detected in brain.

It localises to the cell membrane. In terms of biological role, calcium-dependent cell-adhesion protein involved in cells self-recognition and non-self discrimination. Thereby, it is involved in the establishment and maintenance of specific neuronal connections in the brain. This Rattus norvegicus (Rat) protein is Protocadherin alpha-4.